We begin with the raw amino-acid sequence, 494 residues long: Anaerobic nitric oxide reductase flavorubredoxin (494 aa).

The segment at 30–210 (TKGTSYNSYL…PFSALVTAKI (181 aa)) is zinc metallo-hydrolase. The Fe cation site is built by histidine 79, glutamate 81, aspartate 83, histidine 147, aspartate 166, and histidine 227. The 140-residue stretch at 254-393 (ITIFYDSMSN…ECREHGQQIA (140 aa)) folds into the Flavodoxin-like domain. Residues 260–264 (SMSNN) and 342–369 (AFGS…ETAI) each bind FMN. The 52-residue stretch at 441 to 492 (CQCMVCTVCNWVYDPAKGEPNQGIEVGTTWADVPDYFLCPECHLGKDVFVEY) folds into the Rubredoxin-like domain. Fe cation-binding residues include cysteine 446, cysteine 449, cysteine 479, and cysteine 482.

This sequence in the N-terminal section; belongs to the zinc metallo-hydrolase group 3 family. In terms of assembly, homotetramer. The cofactor is Fe cation. Requires FMN as cofactor.

It localises to the cytoplasm. It functions in the pathway nitrogen metabolism; nitric oxide reduction. Anaerobic nitric oxide reductase; uses NADH to detoxify nitric oxide (NO), protecting several 4Fe-4S NO-sensitive enzymes. Has at least 2 reductase partners, only one of which (NorW, flavorubredoxin reductase) has been identified. NO probably binds to the di-iron center; electrons enter from the NorW at rubredoxin and are transferred sequentially to the FMN center and the di-iron center. Also able to function as an aerobic oxygen reductase. This is Anaerobic nitric oxide reductase flavorubredoxin from Vibrio vulnificus (strain YJ016).